The chain runs to 579 residues: Protein alan shepard (579 aa).

Positions 1–12 (MHPRYSPAPPPQ) are enriched in pro residues. Positions 1–66 (MHPRYSPAPP…GSSSSAAAAP (66 aa)) are disordered. The residue at position 5 (Tyr5) is a Phosphotyrosine. Positions 13 to 24 (QQQQMGGPPHQQ) are enriched in low complexity. Over residues 25-35 (QGGGGGGGGSM) the composition is skewed to gly residues. The span at 37-54 (GPSNAQQLPPQIPRSQNY) shows a compositional bias: polar residues. The span at 55-66 (SNGSSSSAAAAP) shows a compositional bias: low complexity. Tyr125 and Tyr142 each carry phosphotyrosine. Residues 164 to 225 (PATTTYGQRV…TVQNQNQQGG (62 aa)) form a disordered region. Positions 178-225 (SPSNTNSSSSSNTGSQSGTLSTSLSNTTNTNTNMGPNGTVQNQNQQGG) are enriched in low complexity. 2 consecutive RRM domains span residues 231-304 (TNLY…MAKQ) and 310-389 (TNLY…FADG). Residues 553 to 579 (MTDSEQASTAASPDEAYTQYPHQAAPK) are disordered.

Functionally, has a role in the perception of gravity. The chain is Protein alan shepard from Drosophila sechellia (Fruit fly).